The sequence spans 320 residues: Malate dehydrogenase (320 aa).

Residues 10 to 15 (GAGNIG) and aspartate 34 contribute to the NAD(+) site. Arginine 83 and arginine 89 together coordinate substrate. NAD(+) is bound by residues asparagine 96 and 119–121 (ITN). Asparagine 121 and arginine 152 together coordinate substrate. Histidine 176 functions as the Proton acceptor in the catalytic mechanism.

This sequence belongs to the LDH/MDH superfamily. MDH type 3 family.

It carries out the reaction (S)-malate + NAD(+) = oxaloacetate + NADH + H(+). In terms of biological role, catalyzes the reversible oxidation of malate to oxaloacetate. The sequence is that of Malate dehydrogenase from Sphingopyxis alaskensis (strain DSM 13593 / LMG 18877 / RB2256) (Sphingomonas alaskensis).